The primary structure comprises 469 residues: Probable acetate kinase (469 aa).

Residue asparagine 30 coordinates Mg(2+). Lysine 37 is an ATP binding site. Residue arginine 122 coordinates substrate. The active-site Proton donor/acceptor is the aspartate 179. 239–243 (HLGSG) contributes to the ATP binding site. Glutamate 453 is a Mg(2+) binding site.

The protein belongs to the acetokinase family. Mg(2+) is required as a cofactor.

It carries out the reaction acetate + ATP = acetyl phosphate + ADP. It functions in the pathway metabolic intermediate biosynthesis; acetyl-CoA biosynthesis; acetyl-CoA from acetate: step 1/2. The protein is Probable acetate kinase of Neurospora crassa (strain ATCC 24698 / 74-OR23-1A / CBS 708.71 / DSM 1257 / FGSC 987).